A 92-amino-acid chain; its full sequence is Sec-independent protein translocase protein TatA (92 aa).

Residues 1 to 21 (MGIFDWKHWIVILVVVVLVFG) traverse the membrane as a helical segment. A disordered region spans residues 44-92 (NDDEKPADPVVNPVPPAQPVHPQATQPITERRTFDVQAEKVEEPTRKDS). Residues 72-92 (TERRTFDVQAEKVEEPTRKDS) show a composition bias toward basic and acidic residues.

This sequence belongs to the TatA/E family. As to quaternary structure, the Tat system comprises two distinct complexes: a TatABC complex, containing multiple copies of TatA, TatB and TatC subunits, and a separate TatA complex, containing only TatA subunits. Substrates initially bind to the TatABC complex, which probably triggers association of the separate TatA complex to form the active translocon.

It localises to the cell inner membrane. Part of the twin-arginine translocation (Tat) system that transports large folded proteins containing a characteristic twin-arginine motif in their signal peptide across membranes. TatA could form the protein-conducting channel of the Tat system. The polypeptide is Sec-independent protein translocase protein TatA (Pseudomonas fluorescens (strain SBW25)).